The chain runs to 304 residues: Acetyl-coenzyme A carboxylase carboxyl transferase subunit beta (304 aa).

Residues 23-292 (VWTKCDSCGQ…PNPDAPREGV (270 aa)) enclose the CoA carboxyltransferase N-terminal domain. Positions 27, 30, 46, and 49 each coordinate Zn(2+). The segment at 27-49 (CDSCGQVLYRAELERNLEVCPKC) adopts a C4-type zinc-finger fold. The interval 284–304 (NPDAPREGVVVPPAPGQESEA) is disordered.

The protein belongs to the AccD/PCCB family. As to quaternary structure, acetyl-CoA carboxylase is a heterohexamer composed of biotin carboxyl carrier protein (AccB), biotin carboxylase (AccC) and two subunits each of ACCase subunit alpha (AccA) and ACCase subunit beta (AccD). The cofactor is Zn(2+).

It localises to the cytoplasm. It catalyses the reaction N(6)-carboxybiotinyl-L-lysyl-[protein] + acetyl-CoA = N(6)-biotinyl-L-lysyl-[protein] + malonyl-CoA. The protein operates within lipid metabolism; malonyl-CoA biosynthesis; malonyl-CoA from acetyl-CoA: step 1/1. Component of the acetyl coenzyme A carboxylase (ACC) complex. Biotin carboxylase (BC) catalyzes the carboxylation of biotin on its carrier protein (BCCP) and then the CO(2) group is transferred by the transcarboxylase to acetyl-CoA to form malonyl-CoA. This chain is Acetyl-coenzyme A carboxylase carboxyl transferase subunit beta, found in Salmonella arizonae (strain ATCC BAA-731 / CDC346-86 / RSK2980).